Reading from the N-terminus, the 917-residue chain is Protein translocase subunit SecA 1 (917 aa).

ATP is bound by residues Gln-87, Gly-105–Thr-109, and Asp-507. A disordered region spans residues Glu-866–Asn-917. Positions 901, 903, 912, and 913 each coordinate Zn(2+). The segment covering Lys-907–Asn-917 has biased composition (basic residues).

The protein belongs to the SecA family. As to quaternary structure, monomer and homodimer. Part of the essential Sec protein translocation apparatus which comprises SecA, SecYEG and auxiliary proteins SecDF-YajC and YidC. Zn(2+) is required as a cofactor.

The protein localises to the cell inner membrane. It localises to the cytoplasm. It catalyses the reaction ATP + H2O + cellular proteinSide 1 = ADP + phosphate + cellular proteinSide 2.. Functionally, part of the Sec protein translocase complex. Interacts with the SecYEG preprotein conducting channel. Has a central role in coupling the hydrolysis of ATP to the transfer of proteins into and across the cell membrane, serving both as a receptor for the preprotein-SecB complex and as an ATP-driven molecular motor driving the stepwise translocation of polypeptide chains across the membrane. This chain is Protein translocase subunit SecA 1, found in Nitrosospira multiformis (strain ATCC 25196 / NCIMB 11849 / C 71).